The following is a 505-amino-acid chain: MSEQKPQVAEQAQELNSELQARREKLAVLRGKGIAFPNDFRRENLSDQLHAEFDSKENEELEALNIDVTVAGRMMTRRIMGKASFVTLQDVGGRIQLYVSRDDLPEGVYNEEFKKWDLGDILGARGKLFKTKTGELSIHCSELRLLTKALRPLPDKFHGLADQETRYRQRYLDLIANDESRHTFKVRSQVMSGIRSFMVEKGFMEVETPMMQVIPGGASARPFVTHHNALDIDMYLRIAPELYLKRLVVGGFERVFEINRNFRNEGVSPRHNPEFTMMELYMAYADYKDLIVLTEELFRTLTETILGSSVVQYGEQTFDFGKPFAKLTMKEAICKYRPETNVADLDDMDKAVAIAESLGIKVEKSWGLGRIQCEIFEETAESHLIQPTFITEYPAEVSPLARRNDDNPFITDRFEFFIGGREIGNGFSELNDAEDQAQRFADQVSAKEAGDDEAMFYDEDYITALEHGLPPTAGLGIGIDRMVMLFTNSHTIRDVILFPAMRPVK.

Positions 415 and 422 each coordinate Mg(2+).

Belongs to the class-II aminoacyl-tRNA synthetase family. As to quaternary structure, homodimer. It depends on Mg(2+) as a cofactor.

The protein resides in the cytoplasm. The enzyme catalyses tRNA(Lys) + L-lysine + ATP = L-lysyl-tRNA(Lys) + AMP + diphosphate. This is Lysine--tRNA ligase from Yersinia pseudotuberculosis serotype O:1b (strain IP 31758).